Consider the following 234-residue polypeptide: Demethylmenaquinone methyltransferase (234 aa).

S-adenosyl-L-methionine-binding positions include Thr-58, Asp-79, and 106–107; that span reads NA.

The protein belongs to the class I-like SAM-binding methyltransferase superfamily. MenG/UbiE family.

It catalyses the reaction a 2-demethylmenaquinol + S-adenosyl-L-methionine = a menaquinol + S-adenosyl-L-homocysteine + H(+). It participates in quinol/quinone metabolism; menaquinone biosynthesis; menaquinol from 1,4-dihydroxy-2-naphthoate: step 2/2. Functionally, methyltransferase required for the conversion of demethylmenaquinol (DMKH2) to menaquinol (MKH2). This Geobacillus stearothermophilus (Bacillus stearothermophilus) protein is Demethylmenaquinone methyltransferase.